The following is a 475-amino-acid chain: tRNA modification GTPase MnmE (475 aa).

R24, E81, and K124 together coordinate (6S)-5-formyl-5,6,7,8-tetrahydrofolate. The TrmE-type G domain occupies 220–397 (GLSVVLAGQP…MRSELLRLIG (178 aa)). N230 lines the K(+) pocket. GTP is bound by residues 230 to 235 (NVGKSS), 249 to 255 (TPIAGTT), 274 to 277 (DTAG), and 378 to 380 (SAR). S234 serves as a coordination point for Mg(2+). K(+) is bound by residues T249, I251, and T254. Mg(2+) is bound at residue T255. K475 is a binding site for (6S)-5-formyl-5,6,7,8-tetrahydrofolate.

The protein belongs to the TRAFAC class TrmE-Era-EngA-EngB-Septin-like GTPase superfamily. TrmE GTPase family. Homodimer. Heterotetramer of two MnmE and two MnmG subunits. Requires K(+) as cofactor.

Its subcellular location is the cytoplasm. Exhibits a very high intrinsic GTPase hydrolysis rate. Involved in the addition of a carboxymethylaminomethyl (cmnm) group at the wobble position (U34) of certain tRNAs, forming tRNA-cmnm(5)s(2)U34. The sequence is that of tRNA modification GTPase MnmE from Cupriavidus metallidurans (strain ATCC 43123 / DSM 2839 / NBRC 102507 / CH34) (Ralstonia metallidurans).